A 223-amino-acid chain; its full sequence is Imidazoleglycerol-phosphate dehydratase (223 aa).

The protein belongs to the imidazoleglycerol-phosphate dehydratase family.

It carries out the reaction D-erythro-1-(imidazol-4-yl)glycerol 3-phosphate = 3-(imidazol-4-yl)-2-oxopropyl phosphate + H2O. It participates in amino-acid biosynthesis; L-histidine biosynthesis; L-histidine from 5-phospho-alpha-D-ribose 1-diphosphate: step 6/9. The polypeptide is Imidazoleglycerol-phosphate dehydratase (HIS3) (Zygosaccharomyces bailii).